A 767-amino-acid polypeptide reads, in one-letter code: Phosphoribosylformylglycinamidine synthase subunit PurL (767 aa).

Residue His-65 is part of the active site. The ATP site is built by Tyr-68 and Lys-112. Glu-114 is a Mg(2+) binding site. Residues 115 to 118 (SHNH) and Arg-137 contribute to the substrate site. Residue His-116 is the Proton acceptor of the active site. Mg(2+) is bound at residue Asp-138. Residue Gln-262 coordinates substrate. Asp-290 provides a ligand contact to Mg(2+). 334 to 336 (ESQ) is a binding site for substrate. ATP contacts are provided by Asp-522 and Gly-559. A Mg(2+)-binding site is contributed by Asn-560. Ser-562 is a substrate binding site.

The protein belongs to the FGAMS family. Monomer. Part of the FGAM synthase complex composed of 1 PurL, 1 PurQ and 2 PurS subunits.

It is found in the cytoplasm. It catalyses the reaction N(2)-formyl-N(1)-(5-phospho-beta-D-ribosyl)glycinamide + L-glutamine + ATP + H2O = 2-formamido-N(1)-(5-O-phospho-beta-D-ribosyl)acetamidine + L-glutamate + ADP + phosphate + H(+). Its pathway is purine metabolism; IMP biosynthesis via de novo pathway; 5-amino-1-(5-phospho-D-ribosyl)imidazole from N(2)-formyl-N(1)-(5-phospho-D-ribosyl)glycinamide: step 1/2. In terms of biological role, part of the phosphoribosylformylglycinamidine synthase complex involved in the purines biosynthetic pathway. Catalyzes the ATP-dependent conversion of formylglycinamide ribonucleotide (FGAR) and glutamine to yield formylglycinamidine ribonucleotide (FGAM) and glutamate. The FGAM synthase complex is composed of three subunits. PurQ produces an ammonia molecule by converting glutamine to glutamate. PurL transfers the ammonia molecule to FGAR to form FGAM in an ATP-dependent manner. PurS interacts with PurQ and PurL and is thought to assist in the transfer of the ammonia molecule from PurQ to PurL. This Renibacterium salmoninarum (strain ATCC 33209 / DSM 20767 / JCM 11484 / NBRC 15589 / NCIMB 2235) protein is Phosphoribosylformylglycinamidine synthase subunit PurL.